A 373-amino-acid chain; its full sequence is S-adenosylmethionine:tRNA ribosyltransferase-isomerase (373 aa).

The protein belongs to the QueA family. Monomer.

It is found in the cytoplasm. It catalyses the reaction 7-aminomethyl-7-carbaguanosine(34) in tRNA + S-adenosyl-L-methionine = epoxyqueuosine(34) in tRNA + adenine + L-methionine + 2 H(+). The protein operates within tRNA modification; tRNA-queuosine biosynthesis. Transfers and isomerizes the ribose moiety from AdoMet to the 7-aminomethyl group of 7-deazaguanine (preQ1-tRNA) to give epoxyqueuosine (oQ-tRNA). The sequence is that of S-adenosylmethionine:tRNA ribosyltransferase-isomerase from Prochlorococcus marinus (strain MIT 9515).